Here is a 100-residue protein sequence, read N- to C-terminus: Small ribosomal subunit protein uS14c (100 aa).

The segment at 1-54 (MARKSLIQRERKRQKLEQKFHSIRRSSKKEISKVSSLSGKWEIHGKLQSPPRNS) is disordered.

The protein belongs to the universal ribosomal protein uS14 family. Part of the 30S ribosomal subunit.

Its subcellular location is the plastid. The protein localises to the chloroplast. Binds 16S rRNA, required for the assembly of 30S particles. In Piper cenocladum (Ant piper), this protein is Small ribosomal subunit protein uS14c.